A 276-amino-acid chain; its full sequence is Thymidylate synthase (276 aa).

Arg-26 contributes to the dUMP binding site. His-56 provides a ligand contact to (6R)-5,10-methylene-5,6,7,8-tetrahydrofolate. 131-132 is a dUMP binding site; the sequence is RR. The active-site Nucleophile is the Cys-151. Residues 178 to 181, Asn-189, and 219 to 221 each bind dUMP; these read RSAD and HIY. Asp-181 is a (6R)-5,10-methylene-5,6,7,8-tetrahydrofolate binding site. Residue Ala-275 coordinates (6R)-5,10-methylene-5,6,7,8-tetrahydrofolate.

This sequence belongs to the thymidylate synthase family. Bacterial-type ThyA subfamily. As to quaternary structure, homodimer.

The protein resides in the cytoplasm. The enzyme catalyses dUMP + (6R)-5,10-methylene-5,6,7,8-tetrahydrofolate = 7,8-dihydrofolate + dTMP. It participates in pyrimidine metabolism; dTTP biosynthesis. Catalyzes the reductive methylation of 2'-deoxyuridine-5'-monophosphate (dUMP) to 2'-deoxythymidine-5'-monophosphate (dTMP) while utilizing 5,10-methylenetetrahydrofolate (mTHF) as the methyl donor and reductant in the reaction, yielding dihydrofolate (DHF) as a by-product. This enzymatic reaction provides an intracellular de novo source of dTMP, an essential precursor for DNA biosynthesis. The chain is Thymidylate synthase from Polaromonas naphthalenivorans (strain CJ2).